The sequence spans 100 residues: NADH-quinone oxidoreductase subunit K (100 aa).

Transmembrane regions (helical) follow at residues 3–23, 29–49, and 60–80; these read LNAY…GIFL, ISIM…FVAF, and IFTF…LAIL.

The protein belongs to the complex I subunit 4L family. In terms of assembly, NDH-1 is composed of 14 different subunits. Subunits NuoA, H, J, K, L, M, N constitute the membrane sector of the complex.

The protein localises to the cell inner membrane. It catalyses the reaction a quinone + NADH + 5 H(+)(in) = a quinol + NAD(+) + 4 H(+)(out). Its function is as follows. NDH-1 shuttles electrons from NADH, via FMN and iron-sulfur (Fe-S) centers, to quinones in the respiratory chain. The immediate electron acceptor for the enzyme in this species is believed to be ubiquinone. Couples the redox reaction to proton translocation (for every two electrons transferred, four hydrogen ions are translocated across the cytoplasmic membrane), and thus conserves the redox energy in a proton gradient. The sequence is that of NADH-quinone oxidoreductase subunit K from Magnetococcus marinus (strain ATCC BAA-1437 / JCM 17883 / MC-1).